We begin with the raw amino-acid sequence, 192 residues long: UPF0301 protein Jann_3896 (192 aa).

Belongs to the UPF0301 (AlgH) family.

In Jannaschia sp. (strain CCS1), this protein is UPF0301 protein Jann_3896.